The chain runs to 398 residues: S-adenosylmethionine synthase (398 aa).

His-16 is an ATP binding site. Asp-18 is a Mg(2+) binding site. Glu-44 contacts K(+). Residues Glu-57 and Gln-100 each contribute to the L-methionine site. Positions 100 to 110 (QSPDIAQGVNE) are flexible loop. Residues 175 to 177 (DAK), 242 to 243 (RF), Asp-251, 257 to 258 (RK), Ala-274, and Lys-278 contribute to the ATP site. Position 251 (Asp-251) interacts with L-methionine. Lys-282 contributes to the L-methionine binding site.

The protein belongs to the AdoMet synthase family. As to quaternary structure, homotetramer; dimer of dimers. Requires Mg(2+) as cofactor. K(+) serves as cofactor.

The protein localises to the cytoplasm. The enzyme catalyses L-methionine + ATP + H2O = S-adenosyl-L-methionine + phosphate + diphosphate. Its pathway is amino-acid biosynthesis; S-adenosyl-L-methionine biosynthesis; S-adenosyl-L-methionine from L-methionine: step 1/1. In terms of biological role, catalyzes the formation of S-adenosylmethionine (AdoMet) from methionine and ATP. The overall synthetic reaction is composed of two sequential steps, AdoMet formation and the subsequent tripolyphosphate hydrolysis which occurs prior to release of AdoMet from the enzyme. This is S-adenosylmethionine synthase from Streptococcus agalactiae serotype III (strain NEM316).